The chain runs to 273 residues: Putative phosphoenolpyruvate synthase regulatory protein (273 aa).

153–160 contributes to the ADP binding site; that stretch reads GVSRCGKT.

It belongs to the pyruvate, phosphate/water dikinase regulatory protein family. PSRP subfamily.

It catalyses the reaction [pyruvate, water dikinase] + ADP = [pyruvate, water dikinase]-phosphate + AMP + H(+). The catalysed reaction is [pyruvate, water dikinase]-phosphate + phosphate + H(+) = [pyruvate, water dikinase] + diphosphate. In terms of biological role, bifunctional serine/threonine kinase and phosphorylase involved in the regulation of the phosphoenolpyruvate synthase (PEPS) by catalyzing its phosphorylation/dephosphorylation. The protein is Putative phosphoenolpyruvate synthase regulatory protein of Yersinia pseudotuberculosis serotype I (strain IP32953).